The sequence spans 297 residues: HTH-type transcriptional regulator ArgP (297 aa).

Residues 4–60 (PDYRTLQALDAVIRERGFERAAQKLCITQSAVSQRIKQLENLFGQPLLVRTIPPRPT) form the HTH lysR-type domain. The H-T-H motif DNA-binding region spans 21–40 (FERAAQKLCITQSAVSQRIK).

The protein belongs to the LysR transcriptional regulatory family. Homodimer.

Functionally, controls the transcription of genes involved in arginine and lysine metabolism. The sequence is that of HTH-type transcriptional regulator ArgP from Pectobacterium atrosepticum (strain SCRI 1043 / ATCC BAA-672) (Erwinia carotovora subsp. atroseptica).